Reading from the N-terminus, the 90-residue chain is MSFLSFLLGQKKSSASVAKERLQIILAHERSGRGDSPDYLPQLQQELVAVISKYVKINPDDIKVHLERQDTLEVLEVKIEMPQSETQASV.

Belongs to the MinE family.

Prevents the cell division inhibition by proteins MinC and MinD at internal division sites while permitting inhibition at polar sites. This ensures cell division at the proper site by restricting the formation of a division septum at the midpoint of the long axis of the cell. The sequence is that of Cell division topological specificity factor from Bordetella avium (strain 197N).